Consider the following 1187-residue polypeptide: Trafficking protein particle complex II-specific subunit 120 homolog (1187 aa).

A disordered region spans residues 1037-1059; that stretch reads GTTAKTDSSKEPGDGSSRSADES.

This sequence belongs to the TRS120 family. In terms of assembly, part of the multisubunit TRAPP (transport protein particle) II complex composed of BET3, BET5, TRS20, TRS23, TRS31, TRS33, TRS65, TRS85, TRS120 and TRS130.

The protein localises to the golgi apparatus. The protein resides in the trans-Golgi network. It localises to the early endosome. Functionally, specific subunit of the TRAPP II complex, a highly conserved vesicle tethering complex that is required for the proper transport of proteins in post-Golgi trafficking pathways to the growing cell plate in mitotic active cells. This Oryza sativa subsp. japonica (Rice) protein is Trafficking protein particle complex II-specific subunit 120 homolog.